A 184-amino-acid polypeptide reads, in one-letter code: Large ribosomal subunit protein uL5 (184 aa).

This sequence belongs to the universal ribosomal protein uL5 family. In terms of assembly, part of the 50S ribosomal subunit; part of the 5S rRNA/L5/L18/L25 subcomplex. Contacts the 5S rRNA and the P site tRNA. Forms a bridge to the 30S subunit in the 70S ribosome.

This is one of the proteins that bind and probably mediate the attachment of the 5S RNA into the large ribosomal subunit, where it forms part of the central protuberance. In the 70S ribosome it contacts protein S13 of the 30S subunit (bridge B1b), connecting the 2 subunits; this bridge is implicated in subunit movement. Contacts the P site tRNA; the 5S rRNA and some of its associated proteins might help stabilize positioning of ribosome-bound tRNAs. This chain is Large ribosomal subunit protein uL5, found in Ureaplasma parvum serovar 3 (strain ATCC 27815 / 27 / NCTC 11736).